The primary structure comprises 149 residues: MGLEKSFILFSLLVLVLGWVQPSLGRESSADKFKRQHMDTEGSSKSSPTYCNQMMKRRDMTNGSCKPVNTFVHEPLEDVQAICSQGQVTCKNGKSNCYKSSSTLHITDCRLKGSSKYPNCDYTTTDSQKQLIIACDGNPYVPVHLDDSV.

An N-terminal signal peptide occupies residues 1-25 (MGLEKSFILFSLLVLVLGWVQPSLG). Substrate contacts are provided by lysine 32 and arginine 35. Histidine 37 (proton acceptor) is an active-site residue. 4 cysteine pairs are disulfide-bonded: cysteine 51/cysteine 109, cysteine 65/cysteine 120, cysteine 83/cysteine 135, and cysteine 90/cysteine 97. Residues 66 to 70 (KPVNT), lysine 91, and arginine 110 each bind substrate. Histidine 144 serves as the catalytic Proton donor.

This sequence belongs to the pancreatic ribonuclease family. In terms of assembly, monomer.

The protein localises to the secreted. The enzyme catalyses an [RNA] containing cytidine + H2O = an [RNA]-3'-cytidine-3'-phosphate + a 5'-hydroxy-ribonucleotide-3'-[RNA].. The catalysed reaction is an [RNA] containing uridine + H2O = an [RNA]-3'-uridine-3'-phosphate + a 5'-hydroxy-ribonucleotide-3'-[RNA].. Functionally, endonuclease that catalyzes the cleavage of RNA on the 3' side of pyrimidine nucleotides. Acts on single-stranded and double-stranded RNA. In Rattus fuscipes (Bush rat), this protein is Ribonuclease pancreatic alpha-type.